A 639-amino-acid polypeptide reads, in one-letter code: Zinc finger protein ZIC 5 (639 aa).

Disordered stretches follow at residues 113–171 (PCGG…GHSR), 189–251 (HGAP…GHPH), 323–355 (PGPHLQHHAPPPAPPPPPAPAQHPHQHHPHLPG), and 379–409 (PDELAGLPPPPPPPPPPPPPPPAGGAKPCSK). Residues 124 to 150 (SAPPPPAPPLPPTPSPPPPPPPPPPPA) are compositionally biased toward pro residues. Composition is skewed to pro residues over residues 331-343 (APPPAPPPPPAPA) and 385-401 (LPPPPPPPPPPPPPPPA). The C2H2-type 1; atypical zinc finger occupies 434–461 (HVCFWEDCPREGKPFKAKYKLINHIRVH). 3 C2H2-type zinc fingers span residues 467 to 491 (FPCPFPGCGKVFARSENLKIHKRTH), 497 to 521 (FKCEFDGCDRKFANSSDRKKHSHVH), and 527 to 551 (YYCKIRGCDKSYTHPSSLRKHMKIH). The segment at 548-568 (MKIHCKSPPPSPGPLGYSSVG) is disordered. Phosphoserine is present on residues Ser-554, Ser-558, and Ser-576. The disordered stretch occupies residues 607–639 (APSHLHTPSSNGTTSETEDEEIYGNPEVVRTIH). Over residues 612-621 (HTPSSNGTTS) the composition is skewed to polar residues.

It belongs to the GLI C2H2-type zinc-finger protein family.

Its subcellular location is the nucleus. Essential for neural crest development, converting cells from an epidermal fate to a neural crest cell fate. Binds to DNA. This chain is Zinc finger protein ZIC 5 (ZIC5), found in Homo sapiens (Human).